Here is a 618-residue protein sequence, read N- to C-terminus: Chaperone protein HtpG (618 aa).

Positions 1-331 (MAKHTFQTEV…SEDLPLNVSR (331 aa)) are a; substrate-binding. The segment at 332–541 (EILQQNRILA…EDDPNFAMIK (210 aa)) is b. Residues 542-618 (MMRQMGNALG…RLNAMLERAI (77 aa)) form a c region.

It belongs to the heat shock protein 90 family. As to quaternary structure, homodimer.

Its subcellular location is the cytoplasm. In terms of biological role, molecular chaperone. Has ATPase activity. The sequence is that of Chaperone protein HtpG from Wolinella succinogenes (strain ATCC 29543 / DSM 1740 / CCUG 13145 / JCM 31913 / LMG 7466 / NCTC 11488 / FDC 602W) (Vibrio succinogenes).